We begin with the raw amino-acid sequence, 119 residues long: Protein TusC (119 aa).

This sequence belongs to the DsrF/TusC family. Heterohexamer, formed by a dimer of trimers. The hexameric TusBCD complex contains 2 copies each of TusB, TusC and TusD. The TusBCD complex interacts with TusE.

The protein resides in the cytoplasm. Its function is as follows. Part of a sulfur-relay system required for 2-thiolation of 5-methylaminomethyl-2-thiouridine (mnm(5)s(2)U) at tRNA wobble positions. The sequence is that of Protein TusC from Buchnera aphidicola subsp. Acyrthosiphon pisum (strain 5A).